A 438-amino-acid polypeptide reads, in one-letter code: MPYFPDIERIRYEGPASDSPLAFRHYDADKIILGKPMREHLRMAACYWHTFVWPGSDVFGAGTFKRPWQHAGDPMELAIGKAQAAFEFFSKLGIDYYCFHDTDVAPEGNSLKEYRNHFAQMIDHLERHQEESGIKLLWGTANCFSNPRFAAGAASNPDPEVFACAAAQVFSAMNATQRLKGANYVLWGGREGYETLLNTDLKREREQLGRFMRMVVEHKYKIGFKGDLLIEPKPQEPTKHQYDYDSATVFGFLQQFGLEKEIKVNIEANHATLAGHSFHHEVATAVSLGIFGSIDANRGDPQNGWDTDQFPNSVEEMTLVTYEILKAGGFGNGGFNFDSKVRRQSLDETDLFHGHVGAMDVLALSLERAAAMVQNDQLQRLKDQRYAGWQQPFGQSVLAGDFNLQSLAEHAFANELNPQAVSGRQEMLENVVNRFIYR.

Catalysis depends on residues histidine 100 and aspartate 103. Residues glutamate 231, glutamate 267, histidine 270, aspartate 295, aspartate 306, aspartate 308, and aspartate 338 each contribute to the Mg(2+) site.

It belongs to the xylose isomerase family. As to quaternary structure, homotetramer. It depends on Mg(2+) as a cofactor.

It is found in the cytoplasm. It catalyses the reaction alpha-D-xylose = alpha-D-xylulofuranose. This Pseudomonas fluorescens (strain Pf0-1) protein is Xylose isomerase.